A 100-amino-acid chain; its full sequence is Large ribosomal subunit protein uL23 (100 aa).

Belongs to the universal ribosomal protein uL23 family. Part of the 50S ribosomal subunit. Contacts protein L29, and trigger factor when it is bound to the ribosome.

Functionally, one of the early assembly proteins it binds 23S rRNA. One of the proteins that surrounds the polypeptide exit tunnel on the outside of the ribosome. Forms the main docking site for trigger factor binding to the ribosome. This is Large ribosomal subunit protein uL23 from Pseudothermotoga lettingae (strain ATCC BAA-301 / DSM 14385 / NBRC 107922 / TMO) (Thermotoga lettingae).